The chain runs to 194 residues: dCTP deaminase, dUMP-forming (194 aa).

Residues R105–R110, D123, T131–E133, Q152, Y166, K174, and Q178 contribute to the dCTP site. E133 (proton donor/acceptor) is an active-site residue.

This sequence belongs to the dCTP deaminase family. In terms of assembly, homotrimer.

It carries out the reaction dCTP + 2 H2O = dUMP + NH4(+) + diphosphate. The protein operates within pyrimidine metabolism; dUMP biosynthesis; dUMP from dCTP: step 1/1. Its function is as follows. Bifunctional enzyme that catalyzes both the deamination of dCTP to dUTP and the hydrolysis of dUTP to dUMP without releasing the toxic dUTP intermediate. In Methanobrevibacter smithii (strain ATCC 35061 / DSM 861 / OCM 144 / PS), this protein is dCTP deaminase, dUMP-forming.